The sequence spans 80 residues: Exodeoxyribonuclease 7 small subunit (80 aa).

The protein belongs to the XseB family. As to quaternary structure, heterooligomer composed of large and small subunits.

It is found in the cytoplasm. It carries out the reaction Exonucleolytic cleavage in either 5'- to 3'- or 3'- to 5'-direction to yield nucleoside 5'-phosphates.. In terms of biological role, bidirectionally degrades single-stranded DNA into large acid-insoluble oligonucleotides, which are then degraded further into small acid-soluble oligonucleotides. The sequence is that of Exodeoxyribonuclease 7 small subunit from Rickettsia typhi (strain ATCC VR-144 / Wilmington).